A 366-amino-acid polypeptide reads, in one-letter code: Peptide chain release factor 2 (366 aa).

Position 253 is an N5-methylglutamine (Gln-253).

It belongs to the prokaryotic/mitochondrial release factor family. Methylated by PrmC. Methylation increases the termination efficiency of RF2.

The protein resides in the cytoplasm. Peptide chain release factor 2 directs the termination of translation in response to the peptide chain termination codons UGA and UAA. The sequence is that of Peptide chain release factor 2 (prfB) from Buchnera aphidicola subsp. Baizongia pistaciae (strain Bp).